The sequence spans 111 residues: UPF0342 protein gbs1446 (111 aa).

Belongs to the UPF0342 family.

The sequence is that of UPF0342 protein gbs1446 from Streptococcus agalactiae serotype III (strain NEM316).